The primary structure comprises 463 residues: Calcitonin gene-related peptide type 1 receptor (463 aa).

The first 22 residues, 1–22 (MDKKHILCFLVLLPLNMALISA), serve as a signal peptide directing secretion. Residues 23–138 (ESEEGVNQTD…STHEKVKTAL (116 aa)) lie on the Extracellular side of the membrane. Asn29, Asn65, Asn117, Asn122, Asn127, and Asn128 each carry an N-linked (GlcNAc...) asparagine glycan. 3 disulfide bridges follow: Cys47-Cys73, Cys64-Cys104, and Cys87-Cys126. The chain crosses the membrane as a helical span at residues 139–163 (NLFYLTIIGHGLSIASLIISLIIFF). Topologically, residues 164-174 (YFKSLSCQRIT) are cytoplasmic. Residues 175 to 197 (LHKNLFFSFICNSIVTIIHLTAV) traverse the membrane as a helical segment. The Extracellular segment spans residues 198-208 (ANNQALVATNP). A helical transmembrane segment spans residues 209 to 237 (VSCKVSQFIHLYLMGCNYFWMLCEGVYLH). The Cytoplasmic segment spans residues 238–251 (TLIVVAVFAEKQHL). Residues 252–272 (MWYYFLGWGFPLLPACIHAIA) traverse the membrane as a helical segment. Topologically, residues 273–288 (RSLYYNDNCWISSDTH) are extracellular. The tract at residues 287-288 (TH) is required for RAMP3 interaction. A helical transmembrane segment spans residues 289 to 313 (LLYIIHGPICAALLVNLFFLLNIVR). At 314–328 (VLITKLKVTHQVESN) the chain is on the cytoplasmic side. A helical transmembrane segment spans residues 329-350 (LYMKAVRATLILVPLLGIEFVL). Residues 351–365 (FPWRPEGKVAEEVYD) lie on the Extracellular side of the membrane. The chain crosses the membrane as a helical span at residues 366–386 (YVMHILMHFQGLLVATIFCFF). The Cytoplasmic portion of the chain corresponds to 387 to 463 (NGEVQAILRR…KSENMYDLVM (77 aa)). A phosphoserine mark is found at Ser419 and Ser444.

Belongs to the G-protein coupled receptor 2 family. As to quaternary structure, heterodimer of CALCRL and RAMP1; the receptor complex functions as CGRP receptor. Heterodimer of CALCRL and RAMP2 or CALCRL and RAMP3; the complexes function as adrenomedullin receptor. Expressed predominantly in the lung, thymus, heart and brain.

It localises to the cell membrane. Functionally, g protein-coupled receptor which specificity is determined by its interaction with receptor-activity-modifying proteins (RAMPs). Together with RAMP1, form the receptor complex for calcitonin-gene-related peptides CALCA/CGRP1 and CALCB/CGRP2. Together with RAMP2 or RAMP3, function as receptor complexes for adrenomedullin (ADM and ADM2). Ligand binding causes a conformation change that triggers signaling via guanine nucleotide-binding proteins (G proteins) and modulates the activity of downstream effectors. Activates cAMP-dependent pathway. This is Calcitonin gene-related peptide type 1 receptor from Mus musculus (Mouse).